A 255-amino-acid polypeptide reads, in one-letter code: uncharacterized protein (255 aa).

The 69-residue stretch at 4-72 folds into the J domain; sequence DPYSVLGVEK…KRRKHYDKTG (69 aa). 2 stretches are compositionally biased toward basic residues: residues 167 to 178 and 243 to 255; these read FAPNEKKRKRRA and TKPK…RSKE. 2 disordered regions span residues 167 to 215 and 230 to 255; these read FAPN…EEAL and LISN…RSKE.

It belongs to the DnaJ family.

The protein resides in the nucleus. Its subcellular location is the nucleolus. This is an uncharacterized protein from Schizosaccharomyces pombe (strain 972 / ATCC 24843) (Fission yeast).